A 142-amino-acid polypeptide reads, in one-letter code: AP-2 complex subunit sigma (142 aa).

This sequence belongs to the adaptor complexes small subunit family. Adaptor protein complex 2 (AP-2) is a heterotetramer composed of two large adaptins (alpha-type and beta-type subunits), a medium adaptin (mu-type subunit) and a small adaptin (sigma-type subunit).

Its subcellular location is the cell membrane. It localises to the membrane. It is found in the coated pit. In terms of biological role, subunit of the adaptor protein complex 2 (AP-2). Adaptor protein complexes function in protein transport via transport vesicles in different membrane traffic pathways. Adaptor protein complexes are vesicle coat components and appear to be involved in cargo selection and vesicle formation. AP-2 is involved in clathrin-dependent endocytosis in which cargo proteins are incorporated into vesicles surrounded by clathrin (clathrin-coated vesicles, CCVs) which are destined for fusion with the early endosome. The complex binds polyphosphoinositides. This chain is AP-2 complex subunit sigma (AP17), found in Arabidopsis thaliana (Mouse-ear cress).